A 217-amino-acid chain; its full sequence is Cytochrome c biogenesis ATP-binding export protein CcmA (217 aa).

Residues 6-215 form the ABC transporter domain; that stretch reads FSAKNLACVR…HLDQFAVAEE (210 aa). ATP is bound at residue 38-45; it reads GPNGSGKS.

The protein belongs to the ABC transporter superfamily. CcmA exporter (TC 3.A.1.107) family. The complex is composed of two ATP-binding proteins (CcmA) and two transmembrane proteins (CcmB).

The protein resides in the cell inner membrane. It carries out the reaction heme b(in) + ATP + H2O = heme b(out) + ADP + phosphate + H(+). Its function is as follows. Part of the ABC transporter complex CcmAB involved in the biogenesis of c-type cytochromes; once thought to export heme, this seems not to be the case, but its exact role is uncertain. Responsible for energy coupling to the transport system. This is Cytochrome c biogenesis ATP-binding export protein CcmA from Paramagnetospirillum magneticum (strain ATCC 700264 / AMB-1) (Magnetospirillum magneticum).